Here is a 138-residue protein sequence, read N- to C-terminus: MVVKAAGLVIYRKLAGKIEFLLLQASYPPHHWTPPKGHVDPGEDEWQAAIRETKEEANITKEQLTIHEDCHETLFYEAKGKPKSVKYWLAKLNNPDDVQLSHEHQNWKWCELEDAIKIADYAEMGSLLRKFSAFLAGF.

The region spanning M1–S132 is the Nudix hydrolase domain. The short motif at G37–N58 is the Nudix box element.

This sequence belongs to the Nudix hydrolase family. In terms of assembly, monomer. Mg(2+) is required as a cofactor. Co(2+) serves as cofactor. Requires Mn(2+) as cofactor. The cofactor is Zn(2+). It depends on Ca(2+) as a cofactor.

The catalysed reaction is P(1),P(4)-bis(5'-adenosyl) tetraphosphate + H2O = AMP + ATP + 2 H(+). Functionally, asymmetrically hydrolyzes Ap4A to yield AMP and ATP. The polypeptide is Bis(5'-nucleosyl)-tetraphosphatase [asymmetrical] (ndx-4) (Caenorhabditis elegans).